The primary structure comprises 443 residues: Glucose-6-phosphate isomerase (443 aa).

The Proton donor role is filled by Glu-285. Catalysis depends on residues His-306 and Lys-420.

The protein belongs to the GPI family.

Its subcellular location is the cytoplasm. It catalyses the reaction alpha-D-glucose 6-phosphate = beta-D-fructose 6-phosphate. Its pathway is carbohydrate biosynthesis; gluconeogenesis. The protein operates within carbohydrate degradation; glycolysis; D-glyceraldehyde 3-phosphate and glycerone phosphate from D-glucose: step 2/4. Functionally, catalyzes the reversible isomerization of glucose-6-phosphate to fructose-6-phosphate. In Staphylococcus aureus (strain Mu3 / ATCC 700698), this protein is Glucose-6-phosphate isomerase.